The chain runs to 252 residues: tRNA (guanine-N(1)-)-methyltransferase (252 aa).

S-adenosyl-L-methionine contacts are provided by residues glycine 113 and 133–138 (IGDYVL).

This sequence belongs to the RNA methyltransferase TrmD family. As to quaternary structure, homodimer.

The protein localises to the cytoplasm. It carries out the reaction guanosine(37) in tRNA + S-adenosyl-L-methionine = N(1)-methylguanosine(37) in tRNA + S-adenosyl-L-homocysteine + H(+). Functionally, specifically methylates guanosine-37 in various tRNAs. The sequence is that of tRNA (guanine-N(1)-)-methyltransferase from Xanthomonas campestris pv. campestris (strain B100).